The following is a 500-amino-acid chain: Protein ASPARTIC PROTEASE IN GUARD CELL 1 (500 aa).

The N-terminal stretch at 1–24 is a signal peptide; that stretch reads MAFPRFLSLLAVVTLSLFLTTTDA. Residues 162 to 496 enclose the Peptidase A1 domain; it reads YFSRIGVGTP…DLSKNVIGLS (335 aa). Residue Asp-180 is part of the active site. Intrachain disulfides connect Cys-190/Cys-193, Cys-196/Cys-271, Cys-217/Cys-235, Cys-222/Cys-230, Cys-307/Cys-500, and Cys-419/Cys-461. The active site involves Asp-379.

It belongs to the peptidase A1 family. As to expression, expressed in young seedlings, leaves, guard-cells, stems, flowers and siliques, but not in roots or mesophyll cells.

It is found in the endoplasmic reticulum. Inhibited by pepstatin A. Aspartic protease involved in drought avoidance through abscisic acid signaling. The sequence is that of Protein ASPARTIC PROTEASE IN GUARD CELL 1 (ASPG1) from Arabidopsis thaliana (Mouse-ear cress).